Here is a 541-residue protein sequence, read N- to C-terminus: Ascorbate transporter, chloroplastic (541 aa).

A chloroplast-targeting transit peptide spans 1 to 28; that stretch reads MALGGLISNRNFGSFIGSGNGCQRLGKS. 11 consecutive transmembrane segments (helical) span residues 133 to 155, 170 to 190, 199 to 219, 221 to 241, 263 to 283, 286 to 306, 352 to 372, 390 to 410, 430 to 450, 481 to 501, and 515 to 535; these read VIVLLCFSSFLLCNMDRVNMSIA, VGLIQSSFFWGYLLTQILGGI, VVLGFGVVWWSFATIMTPIAA, LGLPFLLVVRAFMGIGEGVAM, LVYSGMYLGSVTGLAFSPMLI, FGWPSVFYSFGSLGSIWFLLW, VWALIISHFCHNWGTFILLTW, LLCVLPWLTMAVFANIGGWIA, IGFLGPAFFLSQLSHVKTPAM, AGVLLGLSNTAGVLAGVFGTA, and VFKVAVALYLIGTLVWNLFAT.

The protein belongs to the major facilitator superfamily. Sodium/anion cotransporter (TC 2.A.1.14) family. In terms of tissue distribution, expressed in stems, developing siliques, leaf mesophyll cells and sepals of mature flowers. Not detected in roots. Detected in palisade tissue rather than spongy tissue from the leaves.

Its subcellular location is the plastid. It is found in the chloroplast inner membrane. Its activity is regulated as follows. Insensitive to dehydroascorbate, p-isoascorbate, inorganic phosphate, glutamate, ATP, p-aminohippuric acid or tetraethylammonium. Its function is as follows. Inorganic phosphate and probable anion transporter. Ascorbate transporter bridging the chloroplast envelope. Transports ascorbate from the cytosol into the chloroplast. Requires chloride ions and the presence of an electrochemical potential across the membrane for activity. This chain is Ascorbate transporter, chloroplastic (PHT4;4), found in Arabidopsis thaliana (Mouse-ear cress).